The following is a 308-amino-acid chain: MTSKLEQLKQFTTVVADTGDLDAITRLKPVDATTNPSLLLKAAAIPGYADLLKQVKSDAKGNVDLACDKFAVAVGAGILKVIPGRISTEVDARLSFDEPALLSKARQLIELYQAAGIPKDRVLIKLASTWEGIRAAEQLEKEGIQTNLTLLFSFAQAQACADAGVFLISPFVGRIYDWYKKSTGQEYVGANDPGVQSVTRIYNYYKANGYNTVVMGASFRNIGQIEQLAGCDRLTISPELLQQLSDDQGELPQVLKPGDAGEAKQVLSESQFRWAMNEDAMGTEKLAEGIRQFARDQEKLEKLMADKA.

Residue Lys-125 is the Schiff-base intermediate with substrate of the active site.

It belongs to the transaldolase family. Type 1 subfamily. As to quaternary structure, homodimer.

The protein resides in the cytoplasm. The catalysed reaction is D-sedoheptulose 7-phosphate + D-glyceraldehyde 3-phosphate = D-erythrose 4-phosphate + beta-D-fructose 6-phosphate. The protein operates within carbohydrate degradation; pentose phosphate pathway; D-glyceraldehyde 3-phosphate and beta-D-fructose 6-phosphate from D-ribose 5-phosphate and D-xylulose 5-phosphate (non-oxidative stage): step 2/3. Transaldolase is important for the balance of metabolites in the pentose-phosphate pathway. The chain is Transaldolase from Pseudomonas putida (strain W619).